Reading from the N-terminus, the 451-residue chain is Runt-related transcription factor 1 (451 aa).

Residues 1-37 (MRIPVDASTSRRFTPPSTALSPGKMSEALPLGAPDGG) form a disordered region. The span at 7-20 (ASTSRRFTPPSTAL) shows a compositional bias: polar residues. Threonine 14 is subject to Phosphothreonine. A Phosphoserine modification is found at serine 21. N6-acetyllysine occurs at positions 24 and 43. A Runt domain is found at 50 to 178 (SMVEVLADHP…TVDGPREPRR (129 aa)). Residues 80-84 (RCNKT) are interaction with DNA. Chloride-binding residues include asparagine 112, glutamate 116, arginine 139, and valine 170. Interaction with DNA regions lie at residues 135-143 (RFVGRSGRG) and 168-177 (ITVDGPREPR). Disordered regions lie at residues 170–195 (VDGP…LSFS) and 209–252 (MRVS…SPPW). 2 positions are modified to phosphoserine: serine 193 and serine 212. Residues 222–247 (PRASLNHSTAFNPQPQSQMQDARQIQ) are compositionally biased toward polar residues. The residue at position 249 (serine 249) is a Phosphoserine; by HIPK2. 2 positions are modified to phosphoserine: serine 266 and serine 268. Positions 268–290 (SVHPATPISPGRASGMTSLSAEL) are disordered. Threonine 273 is subject to Phosphothreonine; by HIPK2. The residue at position 276 (serine 276) is a Phosphoserine; by HIPK2. An interaction with KAT6A region spans residues 291–370 (SSRLSTAPDL…SQAQAGPFQT (80 aa)). A Phosphothreonine modification is found at threonine 296. An interaction with KAT6B region spans residues 307 to 399 (RQFPTLPSIS…MVGGERSPPR (93 aa)). The interaction with FOXP3 stretch occupies residues 361-401 (SQAQAGPFQTGSPSYHLYYGASAGSYQFSMVGGERSPPRIL). A disordered region spans residues 406–451 (NASTGAALLNPSLPSQSDVVETEGSHSNSPTNMPPARLEEAVWRPY). Polar residues predominate over residues 417–436 (SLPSQSDVVETEGSHSNSPT). Serine 434 is subject to Phosphoserine. Residues 442–451 (RLEEAVWRPY) are compositionally biased toward basic and acidic residues.

As to quaternary structure, heterodimer with CBFB. RUNX1 binds DNA as a monomer and through the Runt domain. DNA-binding is increased by heterodimerization. Interacts with TLE1 and ALYREF/THOC4. Interacts with HIPK2, ELF1, ELF2 and SPI1. Interacts via its Runt domain with the ELF4 N-terminal region. Interaction with ELF2 isoform 2 (NERF-1a) may act to repress RUNX1-mediated transactivation. Interacts with KAT6A and KAT6B. Interacts with SUV39H1, leading to abrogation of transactivating and DNA-binding properties of RUNX1. Interacts with YAP1. Interaction with CDK6 prevents myeloid differentiation, reducing its transcription transactivation activity. Found in a complex with PRMT5, RUNX1 and CBFB. Interacts with FOXP3. Interacts with TBX21. Interacts with DPF2. In terms of processing, phosphorylated in its C-terminus upon IL-6 treatment. Phosphorylation enhances interaction with KAT6A. Methylated. Post-translationally, phosphorylated in Ser-249 Thr-273 and Ser-276 by HIPK2 when associated with CBFB and DNA. This phosphorylation promotes subsequent EP300 phosphorylation. As to expression, isoform 4 is expressed at high levels in thymus, spleen and T-cell lines and at lower levels in myeloid cell lines and nonhematopoietic cells. Isoform 5 is expressed ubiquitously in lumbar vertebrae, brain, kidney, heart, muscle, ovary and osteoblast-like cell line MC3T3-E1.

It localises to the nucleus. Forms the heterodimeric complex core-binding factor (CBF) with CBFB. RUNX members modulate the transcription of their target genes through recognizing the core consensus binding sequence 5'-TGTGGT-3', or very rarely, 5'-TGCGGT-3', within their regulatory regions via their runt domain, while CBFB is a non-DNA-binding regulatory subunit that allosterically enhances the sequence-specific DNA-binding capacity of RUNX. The heterodimers bind to the core site of a number of enhancers and promoters, including murine leukemia virus, polyomavirus enhancer, T-cell receptor enhancers, LCK, IL3 and GM-CSF promoters. Essential for the development of normal hematopoiesis. Acts synergistically with ELF4 to transactivate the IL-3 promoter and with ELF2 to transactivate the BLK promoter. Inhibits KAT6B-dependent transcriptional activation. Involved in lineage commitment of immature T cell precursors. CBF complexes repress ZBTB7B transcription factor during cytotoxic (CD8+) T cell development. They bind to RUNX-binding sequence within the ZBTB7B locus acting as transcriptional silencer and allowing for cytotoxic T cell differentiation. CBF complexes binding to the transcriptional silencer is essential for recruitment of nuclear protein complexes that catalyze epigenetic modifications to establish epigenetic ZBTB7B silencing. Controls the anergy and suppressive function of regulatory T-cells (Treg) by associating with FOXP3. Activates the expression of IL2 and IFNG and down-regulates the expression of TNFRSF18, IL2RA and CTLA4, in conventional T-cells. Positively regulates the expression of RORC in T-helper 17 cells. Its function is as follows. Isoform 4 shows higher binding activities for target genes and binds TCR-beta-E2 and RAG-1 target site with threefold higher affinity than other isoforms. It is less effective in the context of neutrophil terminal differentiation. The polypeptide is Runt-related transcription factor 1 (Runx1) (Mus musculus (Mouse)).